Reading from the N-terminus, the 306-residue chain is Glutaminase (306 aa).

Substrate contacts are provided by S61, N111, E157, N164, Y188, Y240, and V258.

This sequence belongs to the glutaminase family. Homotetramer.

It carries out the reaction L-glutamine + H2O = L-glutamate + NH4(+). The chain is Glutaminase from Psychrobacter cryohalolentis (strain ATCC BAA-1226 / DSM 17306 / VKM B-2378 / K5).